The chain runs to 605 residues: METHIGSVDGAAAAADNGAVGCPASAVGCPMTSARPAPVSAGEASLGRHLARRLVQVGVSDVFAVPGDFNLTLLDHLIAEPGLRLVGCCNELNAGYAADGYARARGVGACAVTFTVGGLSVLNAIAGAYSENLPVICIAGGPNSNDYGTNRILHHTIGLPDFSQELRCFQTVTCHQAVVTNLEDAHEQIDTAIATALRESKPVYLSISCNLPGLPHPTFSRDPVPFFLAPRLSNKMGLEAAVEATVEFLNKAVKPVLVGGPKLRVAKAGKAFVDLVDASGYAYAVMPSAKGLVPETHPHFIGTYWGAVSTAFCAEIVESADAYLFAGPIFNDYSSVGYSFLLKKDKAIIVQPERVIVGNGPAFGCVMMKEFLSELAKRVNKNTTAYENYKRIFVPEGQPLESEPNEPLRVNVLFKHVQKMLNSDSAVIAETGDSWFNCQKLKLPEGCGYEFQMQYGSIGWSVGALLGYAQGAKDKRVIACIGDGSFQVTAQDVSTMIRCAQNSIIFLINNGGYTIEVEIHDGPYNVIKNWNYTGLVDAIHNGEGKCWTSKVKCEEELTEAIGMALGEKDCLCFIEVIAHKDDTSKELLEWGSRVSAANSRPPNPQ.

Substrate contacts are provided by Asp68 and His155. The segment at 433-515 is thiamine pyrophosphate binding; it reads DSWFNCQKLK…FLINNGGYTI (83 aa). Asp483, Asn510, and Gly512 together coordinate Mg(2+). Glu516 lines the substrate pocket.

Belongs to the TPP enzyme family. Homotetramer. Requires a metal cation as cofactor. Thiamine diphosphate serves as cofactor.

It carries out the reaction a 2-oxocarboxylate + H(+) = an aldehyde + CO2. This chain is Pyruvate decarboxylase 2 (PDC2), found in Oryza sativa subsp. japonica (Rice).